The primary structure comprises 568 residues: Natural resistance-associated macrophage protein 2 (568 aa).

Over residues 1–20 (MVLDPEEKIPDDGASGDHGD) the composition is skewed to basic and acidic residues. Residues 1 to 45 (MVLDPEEKIPDDGASGDHGDSASLGAINPAYSNSSLPHSTGDSEE) are disordered. Residues 1 to 69 (MVLDPEEKIP…EEYSCFSFRK (69 aa)) lie on the Cytoplasmic side of the membrane. Positions 30 to 40 (AYSNSSLPHST) are enriched in polar residues. Residues 70 to 90 (LWAFTGPGFLMSIAYLDPGNI) form a helical membrane-spanning segment. The Extracellular portion of the chain corresponds to 91-95 (ESDLQ). A helical transmembrane segment spans residues 96-117 (SGAVAGFKLLWVLLLATIVGLL). Topologically, residues 118 to 154 (LQRLAARLGVVTGLHLAEVCHRQYPKVPRIILWLMVE) are cytoplasmic. Residues 155-175 (LAIIGSDMQEVIGSAIAINLL) form a helical membrane-spanning segment. The Extracellular segment spans residues 176–179 (SAGR). A helical membrane pass occupies residues 180–194 (VPLYGGVLITIADTF). Residues 195–208 (VFLFLDKYGLRKLE) lie on the Cytoplasmic side of the membrane. Residues 209 to 229 (AFFGFLITIMALTFGYEYVTV) traverse the membrane as a helical segment. The Extracellular portion of the chain corresponds to 230 to 255 (KPSQSQVLRGMFVPSCSGCHTPQVEQ). A helical membrane pass occupies residues 256 to 276 (AVGIVGAVIMPHNMYLHSALV). At 277-301 (KSRQVNRANKQEVREANKYFFIESC) the chain is on the cytoplasmic side. The helical transmembrane segment at 302–322 (IALFVSFIINVFVVSVFAEAF) threads the bilayer. Topologically, residues 323 to 360 (FEKTNEQVVEVCRNSSSPHADLFPNDNSTLAVDIYKGG) are extracellular. N-linked (GlcNAc...) asparagine glycosylation is found at asparagine 336 and asparagine 349. A helical membrane pass occupies residues 361–381 (VVLGCYFGPAALYIWAVGILA). The Cytoplasmic segment spans residues 382 to 408 (AGQSSTMTGTYSGQFVMEGFLNLKWSR). A helical transmembrane segment spans residues 409–429 (FARVILTRSIAIIPTLLVAVF). The Extracellular segment spans residues 430–440 (QDVEHLTGMND). The chain crosses the membrane as a helical span at residues 441–461 (FLNVLQSLQLPFALIPILTFT). The Cytoplasmic portion of the chain corresponds to 462–482 (SLRPVMSEFSNGIGWRIAGGI). Residues 483–503 (LVLLVCSINMYFVVVYVQELG) form a helical membrane-spanning segment. At 504-506 (HVA) the chain is on the extracellular side. Residues 507 to 527 (LYVVAAVVSVAYLGFVFYLGW) form a helical membrane-spanning segment. The Cytoplasmic segment spans residues 528-568 (QCLIALGLSFLDCGRSYHLGLTARPEIYLLNTVDAVSLVSR). The segment at 555–559 (YLLNT) is required for early endosome targeting. Leucine 556, serine 564, and serine 567 each carry phosphoserine.

Belongs to the NRAMP family. Forms a complex with NDFIP1 and NEDD4L, in cortical neurons, in response to iron and cobalt exposure; this interaction leads to SLC11A2 ubiquitination by NEDD4L and proteasome-dependent degradation. Interacts with NDFIP1, NDFIP2 and WWP2; this interaction leads to SLC11A2 ubiquitination by WWP2 and subsequent proteasome-dependent degradation. Interacts with COX2 and TOM6 at the outer mitochondrion membrane. Interacts with ARRDC1; this interaction regulates the incorporation of SLC11A2 into extracellular vesicles through an ubiquitination-dependent mechanism. Interacts with ARRDC4; controls the incorporation of SLC11A2 into extracellular vesicles through an ubiquitination-dependent mechanism. Ubiquitinated by WWP2. Post-translationally, N-glycosylated. In terms of tissue distribution, ubiquitous. As to expression, expressed in proximal intestine, kidney and brain.

It localises to the golgi apparatus. The protein resides in the trans-Golgi network membrane. The protein localises to the early endosome membrane. It is found in the recycling endosome membrane. Its subcellular location is the late endosome membrane. It localises to the lysosome membrane. The protein resides in the apical cell membrane. The protein localises to the mitochondrion outer membrane. It is found in the extracellular vesicle membrane. The enzyme catalyses Fe(2+)(in) + H(+)(in) = Fe(2+)(out) + H(+)(out). It catalyses the reaction Cd(2+)(out) + H(+)(out) = Cd(2+)(in) + H(+)(in). The catalysed reaction is Co(2+)(out) + H(+)(out) = Co(2+)(in) + H(+)(in). It carries out the reaction Mn(2+)(in) + H(+)(in) = Mn(2+)(out) + H(+)(out). The enzyme catalyses Zn(2+)(out) + H(+)(out) = Zn(2+)(in) + H(+)(in). It catalyses the reaction Ni(2+)(out) + H(+)(out) = Ni(2+)(in) + H(+)(in). The catalysed reaction is H(+)(in) = H(+)(out). It carries out the reaction Fe(2+)(in) = Fe(2+)(out). Inhibited by 2-(3-carbamimidoylsulfanylmethyl-benzyl)-isothiourea. Its function is as follows. Proton-coupled metal ion symporter operating with a proton to metal ion stoichiometry of 1:1. Selectively transports various divalent metal cations, in decreasing affinity: Cd(2+) &gt; Fe(2+) &gt; Co(2+), Mn(2+) &gt;&gt; Zn(2+), Ni(2+), VO(2+). Essential for maintenance of iron homeostasis by modulating intestinal absorption of dietary Fe(2+) and TF-associated endosomal Fe(2+) transport in erythroid precursors and other cells. Enables Fe(2+) and Mn(2+) ion entry into mitochondria, and is thus expected to promote mitochondrial heme synthesis, iron-sulfur cluster biogenesis and antioxidant defense. Can mediate uncoupled fluxes of either protons or metal ions. The chain is Natural resistance-associated macrophage protein 2 (Slc11a2) from Rattus norvegicus (Rat).